We begin with the raw amino-acid sequence, 354 residues long: Probable trehalose-phosphate phosphatase E (354 aa).

The protein belongs to the trehalose phosphatase family. It depends on a divalent metal cation as a cofactor.

It carries out the reaction alpha,alpha-trehalose 6-phosphate + H2O = alpha,alpha-trehalose + phosphate. It participates in glycan biosynthesis; trehalose biosynthesis. Its function is as follows. Removes the phosphate from trehalose 6-phosphate to produce free trehalose. Trehalose accumulation in plant may improve abiotic stress tolerance. In Arabidopsis thaliana (Mouse-ear cress), this protein is Probable trehalose-phosphate phosphatase E (TPPE).